We begin with the raw amino-acid sequence, 506 residues long: RNA-splicing ligase RtcB homolog (506 aa).

Residues Asp-120, Cys-123, His-228, His-260, and His-354 each coordinate Mn(2+). 227–231 serves as a coordination point for GMP; the sequence is NHYAE. Residues 354–355, 403–406, Ser-410, 429–432, and Lys-505 contribute to the GMP site; these read HN, GGTM, and HGAG. Catalysis depends on His-429, which acts as the GMP-histidine intermediate.

Belongs to the RtcB family. As to quaternary structure, catalytic component of the tRNA-splicing ligase complex. Mn(2+) serves as cofactor.

It catalyses the reaction a 3'-end 3'-phospho-ribonucleotide-RNA + a 5'-end dephospho-ribonucleoside-RNA + GTP = a ribonucleotidyl-ribonucleotide-RNA + GMP + diphosphate. It carries out the reaction a 3'-end 2',3'-cyclophospho-ribonucleotide-RNA + a 5'-end dephospho-ribonucleoside-RNA + GTP + H2O = a ribonucleotidyl-ribonucleotide-RNA + GMP + diphosphate + H(+). Catalytic subunit of the tRNA-splicing ligase complex that acts by directly joining spliced tRNA halves to mature-sized tRNAs by incorporating the precursor-derived splice junction phosphate into the mature tRNA as a canonical 3',5'-phosphodiester. May act as an RNA ligase with broad substrate specificity, and may function toward other RNAs. The sequence is that of RNA-splicing ligase RtcB homolog from Plasmodium falciparum (isolate 3D7).